The chain runs to 247 residues: 2,3-bisphosphoglycerate-dependent phosphoglycerate mutase (247 aa).

Substrate-binding positions include 8 to 15 (RHGQSLWN), 21 to 22 (TG), R60, 87 to 90 (ERHY), K98, 114 to 115 (RR), and 183 to 184 (GN). The Tele-phosphohistidine intermediate role is filled by H9. Catalysis depends on E87, which acts as the Proton donor/acceptor.

Belongs to the phosphoglycerate mutase family. BPG-dependent PGAM subfamily.

It catalyses the reaction (2R)-2-phosphoglycerate = (2R)-3-phosphoglycerate. It functions in the pathway carbohydrate degradation; glycolysis; pyruvate from D-glyceraldehyde 3-phosphate: step 3/5. In terms of biological role, catalyzes the interconversion of 2-phosphoglycerate and 3-phosphoglycerate. This is 2,3-bisphosphoglycerate-dependent phosphoglycerate mutase from Hydrogenobaculum sp. (strain Y04AAS1).